Consider the following 569-residue polypeptide: Santalene synthase (569 aa).

(2E)-geranyl diphosphate-binding residues include R284, D321, D325, and R460. The Mg(2+) site is built by D321 and D325. The short motif at D321–D325 is the DDXXD motif element. Mg(2+) contacts are provided by N463, T467, and E471.

It belongs to the terpene synthase family. Tpsb subfamily. It depends on Mg(2+) as a cofactor. Mn(2+) serves as cofactor.

The catalysed reaction is (2E,6E)-farnesyl diphosphate = (1S,5S,6R)-alpha-bergamotene + diphosphate. It carries out the reaction (2E,6E)-farnesyl diphosphate = (+)-alpha-santalene + diphosphate. The enzyme catalyses (2E,6E)-farnesyl diphosphate = (-)-beta-santalene + diphosphate. Catalyzes a mixture of sesquiterpenoids from (2E,6E)-farnesyl diphosphate in fragrance biosynthesis. Catalyzes the formation of alpha-santalene, beta-santalene, epi-beta-santalene and exo-alpha-bergamotene, as well as traces of alpha-farnesene and beta-farnesene. Also acts with (Z,Z)-farnesyl diphosphate isomer, producing alpha-endo-bergamotene, alpha-santalene, (Z)-beta-farnesene, epi-beta-santalene, and beta-santalene. The protein is Santalene synthase of Santalum album (White sandalwood).